The following is a 379-amino-acid chain: Homoserine O-succinyltransferase (379 aa).

Residues 51 to 360 (NAVLICHALS…DAPQGHDAFL (310 aa)) enclose the AB hydrolase-1 domain. Serine 157 functions as the Nucleophile in the catalytic mechanism. Arginine 227 serves as a coordination point for substrate. Active-site residues include aspartate 323 and histidine 356. Aspartate 357 provides a ligand contact to substrate.

The protein belongs to the AB hydrolase superfamily. MetX family. In terms of assembly, homodimer.

The protein localises to the cytoplasm. The catalysed reaction is L-homoserine + succinyl-CoA = O-succinyl-L-homoserine + CoA. It participates in amino-acid biosynthesis; L-methionine biosynthesis via de novo pathway; O-succinyl-L-homoserine from L-homoserine: step 1/1. Transfers a succinyl group from succinyl-CoA to L-homoserine, forming succinyl-L-homoserine. This Stutzerimonas stutzeri (strain A1501) (Pseudomonas stutzeri) protein is Homoserine O-succinyltransferase.